The primary structure comprises 357 residues: S-adenosylmethionine:tRNA ribosyltransferase-isomerase (357 aa).

The protein belongs to the QueA family. As to quaternary structure, monomer.

The protein resides in the cytoplasm. The catalysed reaction is 7-aminomethyl-7-carbaguanosine(34) in tRNA + S-adenosyl-L-methionine = epoxyqueuosine(34) in tRNA + adenine + L-methionine + 2 H(+). The protein operates within tRNA modification; tRNA-queuosine biosynthesis. In terms of biological role, transfers and isomerizes the ribose moiety from AdoMet to the 7-aminomethyl group of 7-deazaguanine (preQ1-tRNA) to give epoxyqueuosine (oQ-tRNA). In Buchnera aphidicola subsp. Schizaphis graminum (strain Sg), this protein is S-adenosylmethionine:tRNA ribosyltransferase-isomerase.